The following is an 896-amino-acid chain: Protein argonaute 9 (896 aa).

Residues 267-380 (PVVDFLLANQ…FPIEFCNLVS (114 aa)) enclose the PAZ domain. The 308-residue stretch at 550–857 (FLLCILAERK…AAAQMGTVMK (308 aa)) folds into the Piwi domain.

It belongs to the argonaute family. Ago subfamily. As to expression, expressed in embryonic shoot apex region, pollen and developing ovules.

Functionally, involved in RNA-mediated post-transcriptional gene silencing (PTGS). Main component of the RNA-induced silencing complex (RISC) that binds to a short guide RNA such as a microRNA (miRNA) or small interfering RNA (siRNA). RISC uses the mature miRNA or siRNA as a guide for slicer-directed cleavage of homologous mRNAs to repress gene expression. Associates preferentially with small RNAs of 24 nucleotide in length with a 5' terminal adenosine. Interacts with 24 nucleotide sRNAs derived from transposable elements (TEs). Required to silence pericentrometric-located TEs in female gametes and their accessory cells. Necessary to inactivate a significant proportion of long terminal repeat retrotransposons (LTRs) in the ovule. Required to specify cell fate in ovule. Involved in the control of female gamete formation by restricting the specification of gametophyte precursors in a dosage-dependent, non-cell-autonomous manner. Targeted by turnip yellows virus (TuYV) protein P0 (via F-box-like domain) for probable proteasome degradation and thereby inactivating AGO9 function in RNA silencing. The polypeptide is Protein argonaute 9 (AGO9) (Arabidopsis thaliana (Mouse-ear cress)).